Here is a 413-residue protein sequence, read N- to C-terminus: UPF0754 membrane protein PCC7424_0748 (413 aa).

2 helical membrane passes run 3–23 (IALELSTIWTIALPPITGAII) and 391–411 (IVNLGGILGFFVGTIQTVILL).

Belongs to the UPF0754 family.

It localises to the cell inner membrane. The chain is UPF0754 membrane protein PCC7424_0748 from Gloeothece citriformis (strain PCC 7424) (Cyanothece sp. (strain PCC 7424)).